The sequence spans 824 residues: Probable ion channel POLLUX (824 aa).

Positions 45 to 54 (DGDDSSNLPT) are enriched in low complexity. Positions 45-70 (DGDDSSNLPTVPNPEEKPVPVPSQSP) are disordered. Helical transmembrane passes span 81–101 (FSLTHCLKFICSCSFTYVMFL), 135–155 (AVVFFSVIITFVLPFLLYMYL), 198–218 (LALLLATVVLIVYGGLALYAV), and 250–270 (IVSVAISAGGMLIFATMLGLI). RCK N-terminal domains follow at residues 291-432 (SNHI…ETVV) and 550-699 (PEKI…DKSI). Positions 325 to 346 (LAERDKEEMETDIAKFEFDLMG) form a coiled coil.

This sequence belongs to the castor/pollux (TC 1.A.1.23) family.

The protein resides in the nucleus membrane. The sequence is that of Probable ion channel POLLUX from Arabidopsis thaliana (Mouse-ear cress).